The primary structure comprises 392 residues: Phosphoglycerate kinase (392 aa).

Substrate is bound by residues 21 to 23, Arg-36, 59 to 62, Arg-114, and Arg-147; these read DMN and HLGR. ATP is bound by residues Lys-198, Glu-320, and 346-349; that span reads GGDT.

The protein belongs to the phosphoglycerate kinase family. Monomer.

It is found in the cytoplasm. The catalysed reaction is (2R)-3-phosphoglycerate + ATP = (2R)-3-phospho-glyceroyl phosphate + ADP. Its pathway is carbohydrate degradation; glycolysis; pyruvate from D-glyceraldehyde 3-phosphate: step 2/5. The polypeptide is Phosphoglycerate kinase (Neisseria meningitidis serogroup C / serotype 2a (strain ATCC 700532 / DSM 15464 / FAM18)).